Here is a 962-residue protein sequence, read N- to C-terminus: Villin-5 (962 aa).

Gelsolin-like repeat units follow at residues Phe-29–Gly-79, Val-150–Ala-190, Gly-262–Lys-305, Leu-396–Ala-453, Met-534–Glu-574, and Leu-636–Pro-677. Residues Lys-749–Gly-785 are disordered. The segment covering Ser-758–Phe-776 has biased composition (polar residues). Phosphoserine occurs at positions 777 and 787. The segment covering Glu-845–Glu-862 has biased composition (low complexity). The segment at Glu-845–Ser-917 is disordered. The span at Ala-863–Glu-875 shows a compositional bias: polar residues. Residue Ser-883 is modified to Phosphoserine. The segment covering Ser-889–Ser-898 has biased composition (acidic residues). The region spanning Glu-897–Phe-962 is the HP domain.

This sequence belongs to the villin/gelsolin family. Ubiquitous, but expressed preferentially in pollen and stamens.

The protein localises to the cytoplasm. It localises to the cytoskeleton. Its function is as follows. Major actin filament stabilizing factor and regulator of actin dynamics. Binds actin and actin filament bundles in a Ca(2+)-insensitive manner, but caps the barbed end of actin filaments and is able to sever them in a calcium-dependent manner. Required for the construction of actin collars in pollen tubes. Acts synergistically with VLN2 (AC O81644) to regulate polarized pollen tube growth. The polypeptide is Villin-5 (Arabidopsis thaliana (Mouse-ear cress)).